A 262-amino-acid chain; its full sequence is tRNA pseudouridine synthase B (262 aa).

Asp-77 (nucleophile) is an active-site residue.

The protein belongs to the pseudouridine synthase TruB family. Type 1 subfamily.

It carries out the reaction uridine(55) in tRNA = pseudouridine(55) in tRNA. Its function is as follows. Responsible for synthesis of pseudouridine from uracil-55 in the psi GC loop of transfer RNAs. In Protochlamydia amoebophila (strain UWE25), this protein is tRNA pseudouridine synthase B.